We begin with the raw amino-acid sequence, 297 residues long: Lipoyl synthase (297 aa).

C37, C42, C48, C63, C67, C70, and S276 together coordinate [4Fe-4S] cluster. The 217-residue stretch at 49 to 265 (WSRKHATVMI…ERIAKTKGFL (217 aa)) folds into the Radical SAM core domain.

It belongs to the radical SAM superfamily. Lipoyl synthase family. The cofactor is [4Fe-4S] cluster.

Its subcellular location is the cytoplasm. The catalysed reaction is [[Fe-S] cluster scaffold protein carrying a second [4Fe-4S](2+) cluster] + N(6)-octanoyl-L-lysyl-[protein] + 2 oxidized [2Fe-2S]-[ferredoxin] + 2 S-adenosyl-L-methionine + 4 H(+) = [[Fe-S] cluster scaffold protein] + N(6)-[(R)-dihydrolipoyl]-L-lysyl-[protein] + 4 Fe(3+) + 2 hydrogen sulfide + 2 5'-deoxyadenosine + 2 L-methionine + 2 reduced [2Fe-2S]-[ferredoxin]. It functions in the pathway protein modification; protein lipoylation via endogenous pathway; protein N(6)-(lipoyl)lysine from octanoyl-[acyl-carrier-protein]: step 2/2. In terms of biological role, catalyzes the radical-mediated insertion of two sulfur atoms into the C-6 and C-8 positions of the octanoyl moiety bound to the lipoyl domains of lipoate-dependent enzymes, thereby converting the octanoylated domains into lipoylated derivatives. The polypeptide is Lipoyl synthase (Rickettsia prowazekii (strain Madrid E)).